Here is a 293-residue protein sequence, read N- to C-terminus: Triosephosphate isomerase (293 aa).

25-27 contributes to the substrate binding site; it reads NWK. H117 acts as the Electrophile in catalysis. Catalysis depends on E218, which acts as the Proton acceptor.

It belongs to the triosephosphate isomerase family. In terms of assembly, homodimer.

Its subcellular location is the cytoplasm. It catalyses the reaction D-glyceraldehyde 3-phosphate = dihydroxyacetone phosphate. Its pathway is carbohydrate biosynthesis; gluconeogenesis. It functions in the pathway carbohydrate degradation; glycolysis; D-glyceraldehyde 3-phosphate from glycerone phosphate: step 1/1. In terms of biological role, involved in the gluconeogenesis. Catalyzes stereospecifically the conversion of dihydroxyacetone phosphate (DHAP) to D-glyceraldehyde-3-phosphate (G3P). In Tropheryma whipplei (strain Twist) (Whipple's bacillus), this protein is Triosephosphate isomerase.